Here is a 109-residue protein sequence, read N- to C-terminus: Beta-keratin-related protein (109 aa).

Serine 2 bears the N-acetylserine mark.

This sequence belongs to the avian keratin family.

The protein is Beta-keratin-related protein (BKJ) of Coturnix japonica (Japanese quail).